The following is a 329-amino-acid chain: Cytosolic arginine sensor for mTORC1 subunit 1 (329 aa).

Serine 14 carries the phosphoserine modification. 2 consecutive ACT domains span residues 72 to 138 (AEAT…HTLA) and 260 to 321 (GELW…EVLQ). Residues 111–112 (SV), glycine 274, 280–281 (IV), and 300–304 (TFNFD) contribute to the L-arginine site.

The protein belongs to the GATS family. As to quaternary structure, forms homodimers and heterodimers with CASTOR2. Interacts with the GATOR2 complex which is composed of MIOS, SEC13, SEH1L, WDR24 and WDR59; the interaction is negatively regulated by arginine. Interacts with TM4SF5; the interaction is positively regulated by leucine and is negatively regulated by arginine. Post-translationally, phosphorylation at Ser-14 by AKT1, promoting the interaction between CASTOR1 and RNF167. In terms of processing, ubiquitinated by RNF167 via 'Lys-29'-polyubiquitination, leading to its degradation, releasing the GATOR2 complex. Ubiquitination by RNF167 is promoted by phosphorylation at Ser-14 by AKT1.

It localises to the cytoplasm. The protein resides in the cytosol. Functions as an intracellular arginine sensor within the amino acid-sensing branch of the TORC1 signaling pathway. As a homodimer or a heterodimer with CASTOR2, binds and inhibits the GATOR subcomplex GATOR2 and thereby mTORC1. Binding of arginine to CASTOR1 allosterically disrupts the interaction of CASTOR1-containing dimers with GATOR2 which can in turn activate mTORC1 and the TORC1 signaling pathway. In Bos taurus (Bovine), this protein is Cytosolic arginine sensor for mTORC1 subunit 1.